The following is a 235-amino-acid chain: 2,3-bisphosphoglycerate-dependent phosphoglycerate mutase (235 aa).

Substrate-binding positions include 8–15 (RHGESIWN), 21–22 (TG), arginine 58, 110–113 (ERYY), lysine 121, 137–138 (RR), and 181–182 (GN). Residue histidine 9 is the Tele-phosphohistidine intermediate of the active site. Glutamate 110 functions as the Proton donor/acceptor in the catalytic mechanism.

Belongs to the phosphoglycerate mutase family. BPG-dependent PGAM subfamily.

It carries out the reaction (2R)-2-phosphoglycerate = (2R)-3-phosphoglycerate. It participates in carbohydrate degradation; glycolysis; pyruvate from D-glyceraldehyde 3-phosphate: step 3/5. Its function is as follows. Catalyzes the interconversion of 2-phosphoglycerate and 3-phosphoglycerate. The polypeptide is 2,3-bisphosphoglycerate-dependent phosphoglycerate mutase (Methanococcus vannielii (strain ATCC 35089 / DSM 1224 / JCM 13029 / OCM 148 / SB)).